The chain runs to 769 residues: Neprilysin-21 (769 aa).

The Cytoplasmic portion of the chain corresponds to 1–26 (MKPENGAATWHPAKRSCLGRLTTLET). A helical; Signal-anchor for type II membrane protein membrane pass occupies residues 27 to 47 (LLLVFLGLLITALLSVLFLWL). Over 48–769 (WVLDGYKTFT…MNPERKCQVW (722 aa)) the chain is Extracellular. N-linked (GlcNAc...) asparagine glycosylation occurs at asparagine 69. Residues 85-769 (VCTSRECVRL…MNPERKCQVW (685 aa)) form the Peptidase M13 domain. 5 cysteine pairs are disulfide-bonded: cysteine 86-cysteine 91, cysteine 109-cysteine 754, cysteine 117-cysteine 714, cysteine 173-cysteine 428, and cysteine 638-cysteine 766. Residues asparagine 221, asparagine 240, asparagine 272, asparagine 307, asparagine 356, asparagine 412, and asparagine 506 are each glycosylated (N-linked (GlcNAc...) asparagine). Position 601 (histidine 601) interacts with Zn(2+). Residue glutamate 602 is part of the active site. Zn(2+)-binding residues include histidine 605 and glutamate 663. Aspartate 667 (proton donor) is an active-site residue. 2 N-linked (GlcNAc...) asparagine glycosylation sites follow: asparagine 684 and asparagine 698.

Belongs to the peptidase M13 family. Zn(2+) serves as cofactor.

The protein localises to the cell membrane. In terms of biological role, probable cell surface protease. This Caenorhabditis elegans protein is Neprilysin-21 (nep-21).